Reading from the N-terminus, the 132-residue chain is Large ribosomal subunit protein bL17 (132 aa).

The protein belongs to the bacterial ribosomal protein bL17 family. As to quaternary structure, part of the 50S ribosomal subunit. Contacts protein L32.

The polypeptide is Large ribosomal subunit protein bL17 (Ehrlichia canis (strain Jake)).